Here is a 274-residue protein sequence, read N- to C-terminus: Large ribosomal subunit protein uL2 (274 aa).

Residues 223-274 (VVMNPVDHPHGGGEGRTSGGRHPVSPWGVPTKGYKTRSNKRTDKYIVRRRNK) form a disordered region.

The protein belongs to the universal ribosomal protein uL2 family. In terms of assembly, part of the 50S ribosomal subunit. Forms a bridge to the 30S subunit in the 70S ribosome.

Functionally, one of the primary rRNA binding proteins. Required for association of the 30S and 50S subunits to form the 70S ribosome, for tRNA binding and peptide bond formation. It has been suggested to have peptidyltransferase activity; this is somewhat controversial. Makes several contacts with the 16S rRNA in the 70S ribosome. The chain is Large ribosomal subunit protein uL2 from Vibrio cholerae serotype O1 (strain M66-2).